The sequence spans 119 residues: Large ribosomal subunit protein bL20 (119 aa).

The protein belongs to the bacterial ribosomal protein bL20 family.

Binds directly to 23S ribosomal RNA and is necessary for the in vitro assembly process of the 50S ribosomal subunit. It is not involved in the protein synthesizing functions of that subunit. The polypeptide is Large ribosomal subunit protein bL20 (Rhodospirillum centenum (strain ATCC 51521 / SW)).